The following is a 182-amino-acid chain: Large ribosomal subunit protein uL5 (182 aa).

Belongs to the universal ribosomal protein uL5 family. Part of the 50S ribosomal subunit; part of the 5S rRNA/L5/L18/L25 subcomplex. Contacts the 5S rRNA and the P site tRNA. Forms a bridge to the 30S subunit in the 70S ribosome.

Its function is as follows. This is one of the proteins that bind and probably mediate the attachment of the 5S RNA into the large ribosomal subunit, where it forms part of the central protuberance. In the 70S ribosome it contacts protein S13 of the 30S subunit (bridge B1b), connecting the 2 subunits; this bridge is implicated in subunit movement. Contacts the P site tRNA; the 5S rRNA and some of its associated proteins might help stabilize positioning of ribosome-bound tRNAs. The polypeptide is Large ribosomal subunit protein uL5 (Borrelia hermsii (strain HS1 / DAH)).